The following is a 445-amino-acid chain: Probable D-serine dehydratase (445 aa).

The residue at position 116 (lysine 116) is an N6-(pyridoxal phosphate)lysine.

The protein belongs to the serine/threonine dehydratase family. DsdA subfamily. The cofactor is pyridoxal 5'-phosphate.

The catalysed reaction is D-serine = pyruvate + NH4(+). The chain is Probable D-serine dehydratase from Bacillus mycoides (strain KBAB4) (Bacillus weihenstephanensis).